The sequence spans 232 residues: Homeobox protein SAX-1 (232 aa).

Disordered regions lie at residues 1–64 (CLPD…SCAK), 122–150 (KQHPGADGAAAPAPPAAARCSPSPPRPAA), and 185–208 (LLGARVPRASTPRTSENPPRLCPS). Positions 65 to 124 (PRRARTAFTYEQLVALENKFRATRYLSVCERLNLALSLSLTETQVKIWFQNRRTKWKKQH) form a DNA-binding region, homeobox. Residues 126 to 142 (GADGAAAPAPPAAARCS) are compositionally biased toward low complexity.

Belongs to the NK-1 homeobox family. As to expression, transiently expressed in the birth zone of the whole spinal cord regardless of the axial level.

The protein localises to the nucleus. The protein is Homeobox protein SAX-1 (SAX1) of Gallus gallus (Chicken).